The sequence spans 78 residues: MSRVCQLTGTKANNGMAVSHSHIRTKKLQQANLQQRRLWWAEGKRWVNLRITTRALKTIQKKGLGAYAKSLGIDLARL.

Belongs to the bacterial ribosomal protein bL28 family.

The protein is Large ribosomal subunit protein bL28 of Synechococcus sp. (strain WH7803).